The sequence spans 350 residues: Bifunctional nitrilase/nitrile hydratase NIT4B (350 aa).

The 273-residue stretch at 30 to 302 folds into the CN hydrolase domain; that stretch reads VRATVVQAST…EALISADLDL (273 aa). Glu-70 acts as the Proton acceptor in catalysis. The active site involves Lys-157. Cys-191 (nucleophile) is an active-site residue.

This sequence belongs to the carbon-nitrogen hydrolase superfamily. Nitrilase family. Highly expressed in leaves and cotyledons, lower expression in stems and roots.

The enzyme catalyses L-asparagine = 3-cyano-L-alanine + H2O. It catalyses the reaction 3-cyano-L-alanine + 2 H2O = L-aspartate + NH4(+). Functionally, involved in the cyanide detoxification pathway. Has nitrilase and nitrile-hydratase activity in the ratio 3.3:1, producing both asparagine and aspartic acid from beta-cyano-L-alanine (Ala(CN)). Can also use 3-phenylpropionitrile as substrate, but not indole-3-acetonitrile. This Lupinus angustifolius (Narrow-leaved blue lupine) protein is Bifunctional nitrilase/nitrile hydratase NIT4B (NIT4B).